Here is a 215-residue protein sequence, read N- to C-terminus: Adenylate kinase (215 aa).

An ATP-binding site is contributed by 10–15; sequence GAGKGT. Residues 30-59 form an NMP region; the sequence is STGDILRANVRDGTKLGKEAKGYMDKGELV. Residues T31, R36, 57 to 59, 85 to 88, and Q92 contribute to the AMP site; these read ELV and GYPR. The segment at 126-162 is LID; sequence GRYVCTCGESYHMKFNPPKKENVCDACGADLYQRDDD. Residue R127 participates in ATP binding. Zn(2+)-binding residues include C130 and C132. 135–136 contributes to the ATP binding site; sequence SY. Positions 149 and 152 each coordinate Zn(2+). AMP contacts are provided by R159 and R170. G198 contributes to the ATP binding site.

It belongs to the adenylate kinase family. As to quaternary structure, monomer.

The protein resides in the cytoplasm. It catalyses the reaction AMP + ATP = 2 ADP. It participates in purine metabolism; AMP biosynthesis via salvage pathway; AMP from ADP: step 1/1. Catalyzes the reversible transfer of the terminal phosphate group between ATP and AMP. Plays an important role in cellular energy homeostasis and in adenine nucleotide metabolism. This Methanococcoides burtonii (strain DSM 6242 / NBRC 107633 / OCM 468 / ACE-M) protein is Adenylate kinase.